Here is a 95-residue protein sequence, read N- to C-terminus: Large ribosomal subunit protein bL25 (95 aa).

The protein belongs to the bacterial ribosomal protein bL25 family. Part of the 50S ribosomal subunit; part of the 5S rRNA/L5/L18/L25 subcomplex. Contacts the 5S rRNA. Binds to the 5S rRNA independently of L5 and L18.

Its function is as follows. This is one of the proteins that binds to the 5S RNA in the ribosome where it forms part of the central protuberance. This chain is Large ribosomal subunit protein bL25, found in Shewanella frigidimarina (strain NCIMB 400).